The following is a 149-amino-acid chain: Large ribosomal subunit protein bL20m (149 aa).

The transit peptide at 1–9 directs the protein to the mitochondrion; sequence MVFLSLSRW.

The protein belongs to the bacterial ribosomal protein bL20 family. In terms of assembly, component of the mitochondrial ribosome large subunit (39S) which comprises a 16S rRNA and about 50 distinct proteins.

The protein localises to the mitochondrion. The protein is Large ribosomal subunit protein bL20m (mrpl20) of Xenopus laevis (African clawed frog).